The chain runs to 879 residues: Prostaglandin F2 receptor negative regulator (879 aa).

A signal peptide spans Met1–Gly21. 2 Ig-like C2-type domains span residues Arg22–Gln137 and Pro149–Gln263. The Extracellular segment spans residues Arg22–Pro832. 2 cysteine pairs are disulfide-bonded: Cys43–Cys119 and Cys169–Cys247. Asn44 carries an N-linked (GlcNAc...) asparagine glycan. The Cell attachment site motif lies at Arg89 to Asp91. Thr271 carries the phosphothreonine modification. 4 consecutive Ig-like C2-type domains span residues Pro276–Val389, Pro406–Ser536, Ala544–Pro662, and Pro688–His813. A disulfide bridge connects residues Cys299 and Cys373. Residues Asn300, Asn383, and Asn413 are each glycosylated (N-linked (GlcNAc...) asparagine). The Endoplasmic reticulum retention signal signature appears at Pro424–Leu427. Cys429 and Cys515 are oxidised to a cystine. Asn525, Asn600, Asn618, and Asn691 each carry an N-linked (GlcNAc...) asparagine glycan. A disulfide bridge links Cys571 with Cys655. Residues Arg703 to Asp705 carry the Cell attachment site motif. An intrachain disulfide couples Cys711 to Cys793. A helical membrane pass occupies residues Leu833–Cys853. Residues Ser854–Asp879 lie on the Cytoplasmic side of the membrane.

Interacts with CD9 and CD81. Part of a complex composed of CD9, CD81 and IGSF8. Also seems to interact with CD63, CD82 and CD151. As to expression, expressed in myoblasts (at protein level).

Its subcellular location is the endoplasmic reticulum membrane. It localises to the golgi apparatus. It is found in the trans-Golgi network membrane. In terms of biological role, inhibits the binding of prostaglandin F2-alpha (PGF2-alpha) to its specific FP receptor, by decreasing the receptor number rather than the affinity constant. Functional coupling with the prostaglandin F2-alpha receptor seems to occur. In myoblasts, associates with tetraspanins CD9 and CD81 to prevent myotube fusion during muscle regeneration. The protein is Prostaglandin F2 receptor negative regulator (Ptgfrn) of Mus musculus (Mouse).